Consider the following 148-residue polypeptide: Protein PLANT CADMIUM RESISTANCE 9 (148 aa).

The helical transmembrane segment at 59–78 (LAGLMVVAMSSIGCGWYYAS) threads the bilayer.

It belongs to the cornifelin family.

It is found in the membrane. Functionally, may be involved in cadmium resistance. In Arabidopsis thaliana (Mouse-ear cress), this protein is Protein PLANT CADMIUM RESISTANCE 9 (PCR9).